Here is a 216-residue protein sequence, read N- to C-terminus: MTYAYLFKYIIIGDTGVGKSCLLLQFTDKRFQPVHDLTIGVEFGARMVNIDGKQIKLQIWDTAGQESFRSITRSYYRGAAGALLVYDITRRETFNHLTSWLEDARQHSSSNMVIMLIGNKSDLESRRDVKREEGEAFAREHGLIFMETSAKTACNVEEAYINTAKEIYRKIQQGLFDVHNEANGIKIGPQQSITSSVGPCSPQQNVSDIGPDSGCC.

Positions 16, 17, 18, 19, 20, 21, and 38 each coordinate GTP. A Mg(2+)-binding site is contributed by Ser-20. The short motif at 37–42 (LTIGVE) is the Switch 1 element. 2 residues coordinate Mg(2+): Thr-38 and Asp-61. A Switch 2 motif is present at residues 63 to 72 (AGQESFRSIT). GTP contacts are provided by Gly-64, Asn-119, Lys-120, Asp-122, Ala-150, and Lys-151. The span at 189–207 (PQQSITSSVGPCSPQQNVS) shows a compositional bias: polar residues. The segment at 189–216 (PQQSITSSVGPCSPQQNVSDIGPDSGCC) is disordered. S-geranylgeranyl cysteine attachment occurs at residues Cys-215 and Cys-216.

This sequence belongs to the small GTPase superfamily. Rab family. As to quaternary structure, interacts (in GTP-bound form) with GARIN4 (via N-terminus). Interacts (in GTP-bound form) with GARIN5A. Interacts (in GTP-bound form) with GARIN1B. Interacts with VPS39 and VPS41. The cofactor is Mg(2+).

It localises to the cell membrane. The protein resides in the endoplasmic reticulum membrane. It is found in the golgi apparatus membrane. Its subcellular location is the cytoplasmic vesicle. The protein localises to the secretory vesicle. It localises to the acrosome. The protein resides in the autophagosome membrane. The enzyme catalyses GTP + H2O = GDP + phosphate + H(+). Regulated by guanine nucleotide exchange factors (GEFs) which promote the exchange of bound GDP for free GTP, GTPase activating proteins (GAPs) which increase the GTP hydrolysis activity, and GDP dissociation inhibitors (GDIs) which inhibit the dissociation of the nucleotide from the GTPase. Functionally, the small GTPases Rab are key regulators of intracellular membrane trafficking, from the formation of transport vesicles to their fusion with membranes. Rabs cycle between active GTP-bound and inactive GDP-bound states. In their active state, drive transport of vesicular carriers from donor organelles to acceptor organelles to regulate the membrane traffic that maintains organelle identity and morphology. Regulates the compacted morphology of the Golgi. Promotes cytosolic DNA-induced innate immune responses. Regulates IFN responses against DNA viruses by regulating the CGAS-STING signaling axis. Together with RAB2A redundantly required for efficient autophagic flux. This is Ras-related protein Rab-2B (Rab2b) from Mus musculus (Mouse).